A 215-amino-acid chain; its full sequence is Adenylate kinase (215 aa).

ATP is bound at residue 10–15 (GAGKGT). The tract at residues 30-59 (STGDMFRAAIKEGTELGKQAKALMDQGKLV) is NMP. AMP contacts are provided by residues Thr31, Arg36, 57-59 (KLV), 85-88 (GFPR), and Gln92. The tract at residues 122–159 (GRRVHQPSGRTYHIIYNPPKVAGQDDITGEELITRADD) is LID. ATP is bound by residues Arg123 and 132 to 133 (TY). The AMP site is built by Arg156 and Arg167. An ATP-binding site is contributed by Lys200.

This sequence belongs to the adenylate kinase family. As to quaternary structure, monomer.

The protein resides in the cytoplasm. The enzyme catalyses AMP + ATP = 2 ADP. It participates in purine metabolism; AMP biosynthesis via salvage pathway; AMP from ADP: step 1/1. Its function is as follows. Catalyzes the reversible transfer of the terminal phosphate group between ATP and AMP. Plays an important role in cellular energy homeostasis and in adenine nucleotide metabolism. The chain is Adenylate kinase from Haemophilus ducreyi (strain 35000HP / ATCC 700724).